A 905-amino-acid polypeptide reads, in one-letter code: DNA mismatch repair protein MutS (905 aa).

Residues 388-410 (LERPANPEGTYPTDAETSGDTLP) are disordered. 638 to 645 (GPNMAGKS) provides a ligand contact to ATP. The tract at residues 826–847 (RDAARGTNSAPSRQTLPGLDLP) is disordered. Positions 831 to 840 (GTNSAPSRQT) are enriched in polar residues.

Belongs to the DNA mismatch repair MutS family.

Functionally, this protein is involved in the repair of mismatches in DNA. It is possible that it carries out the mismatch recognition step. This protein has a weak ATPase activity. The sequence is that of DNA mismatch repair protein MutS from Nitratidesulfovibrio vulgaris (strain DP4) (Desulfovibrio vulgaris).